The sequence spans 371 residues: NADP-dependent oxidoreductase lnaE (371 aa).

Residues 172-175, lysine 198, tyrosine 214, asparagine 237, 277-283, and 307-309 contribute to the NADP(+) site; these read DEIG, YGTIAEQ, and FGL.

Belongs to the NADP-dependent oxidoreductase L4BD family.

It functions in the pathway secondary metabolite biosynthesis. Its function is as follows. NADP-dependent oxidoreductase; part of the lna gene cluster that mediates the biosynthesis of diastereomeric piperazines. Lna and lnb clusters encode sets of enzymes that produce overlapping sets of previously undescribed metabolites such as piperazinomycin-like metabolites or morpholine. The lna and lnb biosynthetic pathways appear to be part of a signaling network that controls the formation of sclerotia, a resilient overwintering structure. One primary function of the non-canonical nonribosomal peptide synthetases lnaA and lnbA consists in the reduction of L-tyrosine. The presence in the clusters of tailoring enzymes such as the oxidoreductases lnaB, lnbB, lnaE or lnbE, as well as of the cytochrome P450 monooxygenases lnaC, lnaD, or lnbC, might explain formation of various diastereomeric piperazines. This chain is NADP-dependent oxidoreductase lnaE, found in Aspergillus flavus (strain ATCC 200026 / FGSC A1120 / IAM 13836 / NRRL 3357 / JCM 12722 / SRRC 167).